The primary structure comprises 536 residues: Membrane protein insertase YidC (536 aa).

Residues 14-34 (ILIATAISLLFFIPYSYFFAP) form a helical membrane-spanning segment. A disordered region spans residues 43 to 69 (STSMERAEQQAAPQTSSSPKEGQVSSV). Polar residues predominate over residues 53 to 68 (AAPQTSSSPKEGQVSS). A run of 5 helical transmembrane segments spans residues 312–332 (VVEYGFITFFAKPLFLLLDWL), 339–359 (WGWAIVLLTLVVRIILFPLTY), 401–421 (GANPMGGCLPLLLQMPIFFAI), 436–456 (WILWINDLSVMDPYFILPILM), and 484–504 (PLIFTFFFVTFPSGLVLYWFV).

It belongs to the OXA1/ALB3/YidC family. Type 1 subfamily. Interacts with the Sec translocase complex via SecD. Specifically interacts with transmembrane segments of nascent integral membrane proteins during membrane integration.

Its subcellular location is the cell inner membrane. Its function is as follows. Required for the insertion and/or proper folding and/or complex formation of integral membrane proteins into the membrane. Involved in integration of membrane proteins that insert both dependently and independently of the Sec translocase complex, as well as at least some lipoproteins. Aids folding of multispanning membrane proteins. The sequence is that of Membrane protein insertase YidC from Wolinella succinogenes (strain ATCC 29543 / DSM 1740 / CCUG 13145 / JCM 31913 / LMG 7466 / NCTC 11488 / FDC 602W) (Vibrio succinogenes).